Consider the following 94-residue polypeptide: Aspartyl/glutamyl-tRNA(Asn/Gln) amidotransferase subunit C (94 aa).

This sequence belongs to the GatC family. In terms of assembly, heterotrimer of A, B and C subunits.

The catalysed reaction is L-glutamyl-tRNA(Gln) + L-glutamine + ATP + H2O = L-glutaminyl-tRNA(Gln) + L-glutamate + ADP + phosphate + H(+). It carries out the reaction L-aspartyl-tRNA(Asn) + L-glutamine + ATP + H2O = L-asparaginyl-tRNA(Asn) + L-glutamate + ADP + phosphate + 2 H(+). Its function is as follows. Allows the formation of correctly charged Asn-tRNA(Asn) or Gln-tRNA(Gln) through the transamidation of misacylated Asp-tRNA(Asn) or Glu-tRNA(Gln) in organisms which lack either or both of asparaginyl-tRNA or glutaminyl-tRNA synthetases. The reaction takes place in the presence of glutamine and ATP through an activated phospho-Asp-tRNA(Asn) or phospho-Glu-tRNA(Gln). This chain is Aspartyl/glutamyl-tRNA(Asn/Gln) amidotransferase subunit C, found in Desulfitobacterium hafniense (strain DSM 10664 / DCB-2).